A 126-amino-acid chain; its full sequence is Aspartate 1-decarboxylase (126 aa).

Catalysis depends on serine 25, which acts as the Schiff-base intermediate with substrate; via pyruvic acid. Position 25 is a pyruvic acid (Ser) (serine 25). Threonine 57 contacts substrate. Tyrosine 58 serves as the catalytic Proton donor. Residue 73-75 (GAA) coordinates substrate.

It belongs to the PanD family. As to quaternary structure, heterooctamer of four alpha and four beta subunits. It depends on pyruvate as a cofactor. Post-translationally, is synthesized initially as an inactive proenzyme, which is activated by self-cleavage at a specific serine bond to produce a beta-subunit with a hydroxyl group at its C-terminus and an alpha-subunit with a pyruvoyl group at its N-terminus.

It is found in the cytoplasm. The catalysed reaction is L-aspartate + H(+) = beta-alanine + CO2. It participates in cofactor biosynthesis; (R)-pantothenate biosynthesis; beta-alanine from L-aspartate: step 1/1. Its function is as follows. Catalyzes the pyruvoyl-dependent decarboxylation of aspartate to produce beta-alanine. The polypeptide is Aspartate 1-decarboxylase (Tolumonas auensis (strain DSM 9187 / NBRC 110442 / TA 4)).